Consider the following 741-residue polypeptide: Pentatricopeptide repeat-containing protein At3g58590 (741 aa).

PPR repeat units follow at residues 48–78 (PVYVCNNIISLYEKLGEVSLAGKVFDQMPER), 79–113 (NKVSFNTIIKGYSKYGDVDKAWGVFSEMRYFGYLP), 114–146 (NQSTVSGLLSCASLDVRAGTQLHGLSLKYGLFM), 148–178 (DAFVGTCLLCLYGRLDLLEMAEQVFEDMPFK), 179–213 (SLETWNHMMSLLGHRGFLKECMFFFRELVRMGASL), 214–248 (TESSFLGVLKGVSCVKDLDISKQLHCSATKKGLDC), 249–279 (EISVVNSLISAYGKCGNTHMAERMFQDAGSW), 280–314 (DIVSWNAIICATAKSENPLKALKLFVSMPEHGFSP), 315–349 (NQGTYVSVLGVSSLVQLLSCGRQIHGMLIKNGCET), 350–380 (GIVLGNALIDFYAKCGNLEDSRLCFDYIRDK), 381–414 (NIVCWNALLSGYANKDGPICLSLFLQMLQMGFRP), 415–445 (TEYTFSTALKSCCVTELQQLHSVIVRMGYED), 446–481 (NDYVLSSLMRSYAKNQLMNDALLLLDWASGPTSVVP), 483–508 (NIVAGIYSRRGQYHESVKLISTLEQP), 509–543 (DTVSWNIAIAACSRSDYHEEVIELFKHMLQSNIRP), 544–578 (DKYTFVSILSLCSKLCDLTLGSSIHGLITKTDFSC), 580–610 (DTFVCNVLIDMYGKCGSIRSVMKVFEETREK), 611–645 (NLITWTALISCLGIHGYGQEALEKFKETLSLGFKP), 646–680 (DRVSFISILTACRHGGMVKEGMGLFQKMKDYGVEP), and 681–715 (EMDHYRCAVDLLARNGYLKEAEHLIREMPFPADAP).

Belongs to the PPR family. P subfamily.

The sequence is that of Pentatricopeptide repeat-containing protein At3g58590 from Arabidopsis thaliana (Mouse-ear cress).